Here is a 175-residue protein sequence, read N- to C-terminus: Lithostathine (175 aa).

Positions 1-26 (MLPSLGLPRLSWMLLSCLMLLSQIQG) are cleaved as a signal peptide. A propeptide spanning residues 27–37 (ENSQKELPSAR) is cleaved from the precursor. A C-type lectin domain is found at 38–173 (ISCPSGSMAY…NLNLPYVCKF (136 aa)). Intrachain disulfides connect C40/C51, C68/C171, and C146/C163.

Cleaved to give an A chain and a B chain joined by a disulfide bond. As to expression, in pancreatic acinar cells.

The protein localises to the secreted. Functionally, might act as an inhibitor of spontaneous calcium carbonate precipitation. The chain is Lithostathine (PTP) from Bos taurus (Bovine).